The primary structure comprises 251 residues: uncharacterized protein (251 aa).

Belongs to the methyltransferase superfamily.

It is found in the cytoplasm. The protein resides in the nucleus. Probable methyltransferase. This is an uncharacterized protein from Schizosaccharomyces pombe (strain 972 / ATCC 24843) (Fission yeast).